The following is a 126-amino-acid chain: Small ribosomal subunit protein uS12m (126 aa).

Disordered regions lie at residues 1–27 (MPTM…LNKC) and 106–126 (GIPG…KDYI). Composition is skewed to basic residues over residues 12–23 (RESKRRTKRTRA) and 109–120 (GRRRGRSKYGTK).

Belongs to the universal ribosomal protein uS12 family.

Its subcellular location is the mitochondrion. Its function is as follows. Protein S12 is involved in the translation initiation step. The sequence is that of Small ribosomal subunit protein uS12m (RPS12) from Marchantia polymorpha (Common liverwort).